An 814-amino-acid polypeptide reads, in one-letter code: S-layer protein sap (814 aa).

The first 29 residues, 1 to 29 (MAKTNSYKKVIAGTMTAAMVAGVVSPVAA), serve as a signal peptide directing secretion. SLH domains follow at residues 30–93 (AGKT…DAKP), 94–150 (SFAD…KVNG), and 152–214 (PATK…AAKV). Positions 403–479 (FTSKDFKQNN…TVKDSKGKEL (77 aa)) constitute a BIG2 domain.

Probably glycosylated.

The protein resides in the secreted. It is found in the cell wall. It localises to the S-layer. The S-layer is a paracrystalline mono-layered assembly of proteins which coat the surface of bacteria. The sequence is that of S-layer protein sap (sap) from Bacillus anthracis.